A 289-amino-acid polypeptide reads, in one-letter code: Fatty acid elongase 1 (289 aa).

The next 7 membrane-spanning stretches (helical) occupy residues 22–42 (VVGYISGIYLAFVFTGPKLFA), 72–92 (AMVLWNLSLSVFSIFGTSTVT), 123–143 (FWIGVFALSKIPELMDTIFLV), 152–172 (FLHWYHHVTVLLFSWHTYCVG), 177–197 (IWVAAMNYSVHSIMYLYFAIA), 208–228 (WAPYITILQILQMVMGCFVTL), and 251–271 (LLMYASYLYLFSEMFVKAHVL). The HxxHH motif signature appears at 154–158 (HWYHH). Residue His-157 is the Nucleophile of the active site. Asn-282 carries N-linked (GlcNAc...) asparagine glycosylation.

This sequence belongs to the ELO family.

It localises to the endoplasmic reticulum membrane. The catalysed reaction is an acyl-CoA + malonyl-CoA + H(+) = a 3-oxoacyl-CoA + CO2 + CoA. It participates in lipid metabolism; fatty acid biosynthesis. In terms of biological role, involved in the synthesis of fatty acids. Elongates C4 fatty acids. Required for the normal mitochondrial function, energy metabolism and growth of epimastigotes. This is Fatty acid elongase 1 from Trypanosoma cruzi (strain CL Brener).